The primary structure comprises 284 residues: NH(3)-dependent NAD(+) synthetase (284 aa).

Residue 41 to 48 (GLSGGVDS) coordinates ATP. Asp-47 contributes to the Mg(2+) binding site. Residue Arg-127 participates in deamido-NAD(+) binding. Thr-147 provides a ligand contact to ATP. Glu-152 lines the Mg(2+) pocket. Asp-167 is a binding site for deamido-NAD(+). Residues Lys-176 and Ser-199 each coordinate ATP. Positions 264–284 (FKRRPAPGLDLPEPEDPAMSG) are disordered. Residues 275-284 (PEPEDPAMSG) show a composition bias toward acidic residues.

This sequence belongs to the NAD synthetase family. Homodimer.

It catalyses the reaction deamido-NAD(+) + NH4(+) + ATP = AMP + diphosphate + NAD(+) + H(+). It functions in the pathway cofactor biosynthesis; NAD(+) biosynthesis; NAD(+) from deamido-NAD(+) (ammonia route): step 1/1. Its function is as follows. Catalyzes the ATP-dependent amidation of deamido-NAD to form NAD. Uses ammonia as a nitrogen source. This Methanopyrus kandleri (strain AV19 / DSM 6324 / JCM 9639 / NBRC 100938) protein is NH(3)-dependent NAD(+) synthetase.